A 614-amino-acid chain; its full sequence is Interleukin-18 receptor accessory protein (614 aa).

Residues 1-19 form the signal peptide; that stretch reads MLCLGWVFLWFVAGEKTTG. Over 20-356 the chain is Extracellular; the sequence is FNHSACATKK…RTIRLRKKEE (337 aa). Asparagine 21 carries an N-linked (GlcNAc...) asparagine glycan. A disulfide bridge links cysteine 46 with cysteine 126. A disordered region spans residues 59-78; that stretch reads ASQLSPTQSPAHKPCSGSQK. Ig-like C2-type domains lie at 148–234 and 250–352; these read PQRN…WTVR and PEIL…IRLR. Residue asparagine 151 is glycosylated (N-linked (GlcNAc...) asparagine). Disulfide bonds link cysteine 154–cysteine 179, cysteine 174–cysteine 220, and cysteine 179–cysteine 220. Asparagine 227 carries N-linked (GlcNAc...) asparagine glycosylation. A disulfide bond links cysteine 272 and cysteine 336. An N-linked (GlcNAc...) asparagine glycan is attached at asparagine 344. Residues 357–377 form a helical membrane-spanning segment; that stretch reads VVFVYILLGTALMLVGVLVAA. Over 378–614 the chain is Cytoplasmic; that stretch reads AFLYWYWIEV…LLLYSDQKRC (237 aa). Positions 405–558 constitute a TIR domain; the sequence is KEFDAFVSYS…RFWTQIRYHM (154 aa). Residue glutamate 492 is part of the active site.

It belongs to the interleukin-1 receptor family. Forms a ternary complex with IL18 and IL18R1. Within this complex, IL18R1 is involved in ligand-binding and IL18RAP in signaling leading to NF-kappa-B and JNK activation.

The protein resides in the cell membrane. It carries out the reaction NAD(+) + H2O = ADP-D-ribose + nicotinamide + H(+). Functionally, within the IL18 receptor complex, does not mediate IL18-binding, but involved in IL18-dependent signal transduction, leading to NF-kappa-B and JNK activation. May play a role in IL18-mediated IFNG synthesis from T-helper 1 (Th1) cells. The sequence is that of Interleukin-18 receptor accessory protein from Mus musculus (Mouse).